A 1000-amino-acid chain; its full sequence is Lysine-specific histone demethylase 1 (1000 aa).

Residues 104–123 are disordered; the sequence is RRPAGRRGRPALNTSNSLER. A coiled-coil region spans residues 107-137; sequence AGRRGRPALNTSNSLERNGTRYVSAEAPISV. The 97-residue stretch at 153 to 249 folds into the SWIRM domain; the sequence is CYESAIASNL…YGCIYIISSL (97 aa). Residues 260–302, Glu301, and 328–329 each bind FAD; these read VAII…IYEA and LA. A demethylase activity region spans residues 279–950; sequence LFAQYEQDFL…RCESQPIPED (672 aa). Positions 434–529 form a coiled coil; it reads IGWYISIEAF…ADMLNSLAST (96 aa). The disordered stretch occupies residues 780 to 800; it reads TYGTKRNAQQALGKEGERENK. A DNA-binding region (HMG box) is located at residues 841 to 921; that stretch reads SRPSANPYLL…NYSTRLEEYQ (81 aa). 908–909 serves as a coordination point for FAD; sequence AR. A compositionally biased stretch (basic and acidic residues) spans 959–972; that stretch reads EQEDEHLHPEKEGM. The disordered stretch occupies residues 959 to 1000; that stretch reads EQEDEHLHPEKEGMSVENSDDDYHDDLDYEDSISEVFPDNFS. A compositionally biased stretch (acidic residues) spans 976–991; the sequence is NSDDDYHDDLDYEDSI.

This sequence belongs to the flavin monoamine oxidase family. As to quaternary structure, component of the SWM histone demethylase complex composed of at least lsd1, lsd2, phf1 and phf2. Interacts directly with lsd2. FAD is required as a cofactor.

The protein localises to the nucleus. Functionally, catalytic component of the SWM histone demethylase complex that specifically demethylates H3K9me2, a specific tag for epigenetic transcriptional activation, thereby acting as a corepressor. Acts by oxidizing the substrate by FAD to generate the corresponding imine that is subsequently hydrolyzed. Has a role in regulating heterochromatin propagation and euchromatic transcription. Also has a gene activating role. The sequence is that of Lysine-specific histone demethylase 1 (lsd1) from Schizosaccharomyces pombe (strain 972 / ATCC 24843) (Fission yeast).